Reading from the N-terminus, the 91-residue chain is uncharacterized protein (91 aa).

Helical transmembrane passes span 9–29 (LIHA…YTAG), 30–50 (LGIF…VIFG), and 67–87 (WLGC…VLKF).

It localises to the cell membrane. This is an uncharacterized protein from Methanocaldococcus jannaschii (strain ATCC 43067 / DSM 2661 / JAL-1 / JCM 10045 / NBRC 100440) (Methanococcus jannaschii).